We begin with the raw amino-acid sequence, 623 residues long: MALTLRKKQLDSIVRMLHLNQQLQGSPDGVGGGVGSAEEEEAYKILVMDSPCVALLAPVLRVGELRRHGVTLHLNIDKARQQVPDAPAVYLLRPTAANVDRVAADAAAGLYASFHLNFSTCVPRALLERLASATAASRSAHRVARVADQYLDFVCLEEGLFSLAQPRAYVALNDPAAAEADITALVDAIALGLFCVVATLGAVPVIRCAGGGPAEMVAAALDARLRDHLIAKPNLFTEAASTAVASFQRPLLCLFDRNFELSVGIQHDWSYRPLVHDVLGLKSNKLKLPEKYDLDDTDPFWVANSWLQFPKVAEEIEAQLAKYKQDVDEVNQRTGGGRDGVEFDGTDLIGNTRHLMNAVNSLPELTERKKMIDKHTNIATALLGHIKGRSLDGYFECENSMLVDGTLDRTKLMNLLRGNGTKEDKLRLAVTYLLSFETPVPSDLEQVEAALRESEVDMSAFQYVKRIKSLNSQFAGASNTASKVNIVDWAEKLYGHSISAMTGVRNLLSDGKQLAATRAVEALMEGKPNPEVDNYLLFDPRAPKSGTAGQFRGPFREAIVFMIGGGNYIEYRSLTELTQRSQTTKQVIYGATEILNGVEFIQQLSELGQKAGLGGVSSSLPPQ.

This sequence belongs to the STXBP/unc-18/SEC1 family.

In terms of biological role, may be involved in the early secretory pathway. This chain is SEC1 family transport protein SLY1 (SLY1), found in Oryza sativa subsp. japonica (Rice).